The chain runs to 602 residues: Glutaminase liver isoform, mitochondrial (602 aa).

A mitochondrion-targeting transit peptide spans Met1–Ala14. 2 disordered regions span residues Met1 to Gly29 and Ala45 to Ser66. Ser219 contributes to the substrate binding site. An N6-succinyllysine modification is found at Lys253. A substrate-binding site is contributed by Asn268. Lys279 and Lys284 each carry N6-acetyllysine. Substrate is bound by residues Glu314 and Asn321. Lys329 bears the N6-acetyllysine mark. Residues Tyr347, Tyr399, and Val417 each contribute to the substrate site. ANK repeat units follow at residues Asp518–Arg551 and Trp552–Gln585.

Belongs to the glutaminase family. In terms of assembly, homotetramer, dimer of dimers. Does not assemble into higher oligomers. Interacts with the PDZ domain of the syntrophin SNTA1. Interacts with the PDZ domain of TAX1BP3.

The protein localises to the mitochondrion. It catalyses the reaction L-glutamine + H2O = L-glutamate + NH4(+). Its activity is regulated as follows. Enzyme activity is not stimulated by phosphate. Phosphate increases kcat, but decreases substrate affinity, resulting in unchanged enzyme activity. Functionally, plays an important role in the regulation of glutamine catabolism. Promotes mitochondrial respiration and increases ATP generation in cells by catalyzing the synthesis of glutamate and alpha-ketoglutarate. Increases cellular anti-oxidant function via NADH and glutathione production. May play a role in preventing tumor proliferation. The protein is Glutaminase liver isoform, mitochondrial (Gls2) of Mus musculus (Mouse).